Here is a 356-residue protein sequence, read N- to C-terminus: MEIKYRPEELTKLPRSVEYREGKVYMINQRLLPREFKVEEFTTVEAVAEAIKNMTVRGAPAIGAAAAFGLALYAETSKAKTKDEFFDGFYRAYETLKNTRPTAVNLFWALNRIKKLVEEHREDSLDEIKRLIVEEAQKIADEDVEANLRMGHYGAEVLPEGNILTHCNAGSLATVHLGTVGAVVRVMHKEGTLKLLWLDETRPVLQGARLSAWEYSYDGLNVKLIADNAAAFVMQQGKVDAIIVGADRIVANGDFANKIGTYMLAVLAKEHGIPFFTVAPLSSIDMSLSSGKEIPIEERSPEEVLTCGGCRIAPDVPVYNPAFDVTPHKYLTGIITDRGVVWPPFKRNLKKLFETL.

Substrate-binding positions include arginine 57 to alanine 59, arginine 100, and glutamine 206. Catalysis depends on aspartate 247, which acts as the Proton donor. Asparagine 257–lysine 258 lines the substrate pocket.

The protein belongs to the eIF-2B alpha/beta/delta subunits family. MtnA subfamily.

The enzyme catalyses 5-(methylsulfanyl)-alpha-D-ribose 1-phosphate = 5-(methylsulfanyl)-D-ribulose 1-phosphate. In terms of biological role, catalyzes the interconversion of methylthioribose-1-phosphate (MTR-1-P) into methylthioribulose-1-phosphate (MTRu-1-P). The sequence is that of Putative methylthioribose-1-phosphate isomerase from Pyrococcus furiosus (strain ATCC 43587 / DSM 3638 / JCM 8422 / Vc1).